We begin with the raw amino-acid sequence, 337 residues long: MARHSFFCVDGHTCGNPVRLVAGGGPNLEGSTMMEKRAHFLREYDWIRTGLMFEPRGHDMMSGSILYPPTRPDCDVAVLFIETSGCLPMCGHGTIGTVTMAIEQGLVTPKTPGKLNLDTPAGLVAIEYEQNGQYVERVRLTNVPAFLYAEGLEVECPDLGNLKVDVAYGGNFYAIVEPQENYTDMEDYSALQLIAWSPILRERLNEKYKFQHPLLPDINRLSHILWTGKPKHPEAHARNAVFYGDKAIDRSPCGTGTSARMAQLAAKGKLKPGDEFVHESIIGSLFHGRVERATEVVGQDRTLPAIIPSIAGWARMTGYNTIFIDDRDPFAHGFTVA.

Residue Cys-90 is the Proton acceptor of the active site. Substrate contacts are provided by residues 91–92, His-223, and Asp-249; that span reads GH. The active-site Proton donor is the Cys-253. 254–255 serves as a coordination point for substrate; that stretch reads GT.

This sequence belongs to the proline racemase family.

It carries out the reaction trans-4-hydroxy-L-proline = cis-4-hydroxy-D-proline. Catalyzes the epimerization of trans-4-hydroxy-L-proline (t4LHyp) to cis-4-hydroxy-D-proline (c4DHyp). Is likely involved in a degradation pathway that converts t4LHyp to alpha-ketoglutarate. Can also catalyze the epimerization of trans-3-hydroxy-L-proline (t3LHyp) to cis-3-hydroxy-D-proline (c3DHyp), albeit with 170-fold lower efficiency. Displays no proline racemase activity. In Brucella anthropi (strain ATCC 49188 / DSM 6882 / CCUG 24695 / JCM 21032 / LMG 3331 / NBRC 15819 / NCTC 12168 / Alc 37) (Ochrobactrum anthropi), this protein is 4-hydroxyproline 2-epimerase 2.